Here is a 385-residue protein sequence, read N- to C-terminus: GDSL esterase/lipase 5 (385 aa).

The signal sequence occupies residues 1 to 35 (MRESTLMEKVTRRTISSFIFFIVSSTILFLAGKSS). A glycan (N-linked (GlcNAc...) asparagine) is linked at N45. S55 serves as the catalytic Nucleophile. Residues N66, N194, N211, and N289 are each glycosylated (N-linked (GlcNAc...) asparagine). Catalysis depends on residues D345 and H348.

This sequence belongs to the 'GDSL' lipolytic enzyme family.

Its subcellular location is the secreted. This is GDSL esterase/lipase 5 (GLIP5) from Arabidopsis thaliana (Mouse-ear cress).